The following is a 194-amino-acid chain: Probable GTP-binding protein EngB (194 aa).

The EngB-type G domain occupies 22 to 194; sequence DLPEYALAGR…AWQFIKEGME (173 aa). Residues 30–37, 57–61, 75–78, 142–145, and 174–176 contribute to the GTP site; these read GRSNVGKS, GKTQT, DVPG, TKAD, and FSS. Residues Ser37 and Thr59 each coordinate Mg(2+).

It belongs to the TRAFAC class TrmE-Era-EngA-EngB-Septin-like GTPase superfamily. EngB GTPase family. Mg(2+) serves as cofactor.

In terms of biological role, necessary for normal cell division and for the maintenance of normal septation. In Listeria welshimeri serovar 6b (strain ATCC 35897 / DSM 20650 / CCUG 15529 / CIP 8149 / NCTC 11857 / SLCC 5334 / V8), this protein is Probable GTP-binding protein EngB.